A 367-amino-acid chain; its full sequence is D-alanine--D-alanine ligase (367 aa).

In terms of domain architecture, ATP-grasp spans 141-346 (KNLFAQAGLR…YPELIERLIA (206 aa)). An ATP-binding site is contributed by 174–229 (ERELGYPCFVKPANAGSSVGISKCKQRGDLKAAFIEAFQYDRKIIIEEAIVGREIE). The Mg(2+) site is built by D300, E313, and N315.

Belongs to the D-alanine--D-alanine ligase family. Mg(2+) serves as cofactor. It depends on Mn(2+) as a cofactor.

The protein localises to the cytoplasm. The enzyme catalyses 2 D-alanine + ATP = D-alanyl-D-alanine + ADP + phosphate + H(+). The protein operates within cell wall biogenesis; peptidoglycan biosynthesis. Cell wall formation. The sequence is that of D-alanine--D-alanine ligase from Geobacillus kaustophilus (strain HTA426).